The following is a 98-amino-acid chain: Putative protein adenylyltransferase MJ0126 (98 aa).

The short motif at 31 to 45 is the GSX(10)DXD motif element; sequence GSYARNEQTETSDID. D43, D45, and D75 together coordinate Mg(2+).

It belongs to the MntA antitoxin family. In terms of assembly, probably forms a complex with cognate toxin MJ0125. It depends on Mg(2+) as a cofactor.

The enzyme catalyses L-tyrosyl-[protein] + ATP = O-(5'-adenylyl)-L-tyrosyl-[protein] + diphosphate. It carries out the reaction O-(5'-adenylyl)-L-tyrosyl-[protein] + ATP = O-[5'-(adenylyl-(5'-&gt;3')-adenylyl)]-L-tyrosyl-[protein] + diphosphate. Its function is as follows. Probable antitoxin component of a putative type VII toxin-antitoxin (TA) system. Neutralizes cognate toxic MJ0125 by di-AMPylation. The sequence is that of Putative protein adenylyltransferase MJ0126 from Methanocaldococcus jannaschii (strain ATCC 43067 / DSM 2661 / JAL-1 / JCM 10045 / NBRC 100440) (Methanococcus jannaschii).